We begin with the raw amino-acid sequence, 153 residues long: Cytochrome c-type biogenesis protein CcmE (153 aa).

The Cytoplasmic portion of the chain corresponds to 1-8 (MMTPRQRR). A helical; Signal-anchor for type II membrane protein membrane pass occupies residues 9–29 (MTWVALMVAGVSLAAFFALTA). Over 30 to 153 (FQKNLLYFYT…PADYSEYRKK (124 aa)) the chain is Periplasmic. Positions 124 and 128 each coordinate heme. The tract at residues 134-153 (AESLKKNGGLPADYSEYRKK) is disordered.

This sequence belongs to the CcmE/CycJ family.

The protein resides in the cell inner membrane. In terms of biological role, heme chaperone required for the biogenesis of c-type cytochromes. Transiently binds heme delivered by CcmC and transfers the heme to apo-cytochromes in a process facilitated by CcmF and CcmH. This Methylococcus capsulatus (strain ATCC 33009 / NCIMB 11132 / Bath) protein is Cytochrome c-type biogenesis protein CcmE.